Consider the following 336-residue polypeptide: Ribosomal RNA large subunit methyltransferase F (336 aa).

The disordered stretch occupies residues 1-24; the sequence is MPRPTSPHPDAERKSASPLHPRNR.

The protein belongs to the methyltransferase superfamily. METTL16/RlmF family.

Its subcellular location is the cytoplasm. It carries out the reaction adenosine(1618) in 23S rRNA + S-adenosyl-L-methionine = N(6)-methyladenosine(1618) in 23S rRNA + S-adenosyl-L-homocysteine + H(+). Specifically methylates the adenine in position 1618 of 23S rRNA. The protein is Ribosomal RNA large subunit methyltransferase F of Pseudomonas aeruginosa (strain LESB58).